A 224-amino-acid polypeptide reads, in one-letter code: 7-cyano-7-deazaguanine synthase (224 aa).

11–21 contacts ATP; that stretch reads FSGGQDSTTCL. Residues Cys-190, Cys-199, Cys-202, and Cys-205 each contribute to the Zn(2+) site.

It belongs to the QueC family. Zn(2+) serves as cofactor.

It carries out the reaction 7-carboxy-7-deazaguanine + NH4(+) + ATP = 7-cyano-7-deazaguanine + ADP + phosphate + H2O + H(+). It participates in purine metabolism; 7-cyano-7-deazaguanine biosynthesis. Catalyzes the ATP-dependent conversion of 7-carboxy-7-deazaguanine (CDG) to 7-cyano-7-deazaguanine (preQ(0)). The polypeptide is 7-cyano-7-deazaguanine synthase (Parabacteroides distasonis (strain ATCC 8503 / DSM 20701 / CIP 104284 / JCM 5825 / NCTC 11152)).